The primary structure comprises 554 residues: Afadin- and alpha-actinin-binding protein A (554 aa).

Coiled-coil stretches lie at residues 122–287 and 359–449; these read LEYL…SQRK and ENGL…AIRL. The tract at residues 508–528 is disordered; sequence LASSGDYSRRPSKALPITSSS.

This sequence belongs to the ADIP family. In terms of assembly, interacts with WRAP73.

It is found in the cell junction. It localises to the adherens junction. The protein localises to the cytoplasm. Its subcellular location is the cytoskeleton. The protein resides in the microtubule organizing center. It is found in the centrosome. It localises to the centriolar satellite. Belongs to an adhesion system, which plays a role in the organization of homotypic, interneuronal and heterotypic cell-cell adherens junctions (AJs). Involved in cell movement. Acts as a centrosome maturation factor, probably by maintaining the integrity of the pericentriolar material and proper microtubule nucleation at mitotic spindle poles. The function seems to implicate at least in part WRAP73; the SSX2IP:WRAP73 complex is proposed to act as regulator of spindle anchoring at the mitotic centrosome. The chain is Afadin- and alpha-actinin-binding protein A (ssx2ip-a) from Xenopus laevis (African clawed frog).